We begin with the raw amino-acid sequence, 135 residues long: Small ribosomal subunit protein uS11 (135 aa).

The protein belongs to the universal ribosomal protein uS11 family. Part of the 30S ribosomal subunit. Interacts with proteins S7 and S18. Binds to IF-3.

Functionally, located on the platform of the 30S subunit, it bridges several disparate RNA helices of the 16S rRNA. Forms part of the Shine-Dalgarno cleft in the 70S ribosome. This Corynebacterium urealyticum (strain ATCC 43042 / DSM 7109) protein is Small ribosomal subunit protein uS11.